A 358-amino-acid polypeptide reads, in one-letter code: Aromatic amino acid aminotransferase (358 aa).

Position 214 is an N6-(pyridoxal phosphate)lysine (K214).

It belongs to the class-II pyridoxal-phosphate-dependent aminotransferase family. Homodimer. Pyridoxal 5'-phosphate is required as a cofactor.

The catalysed reaction is an aromatic L-alpha-amino acid + 2-oxoglutarate = an aromatic oxo-acid + L-glutamate. Its function is as follows. Aminotransferase that catalyzes the conversion of aromatic amino acids and 2-oxoglutarate into corresponding aromatic oxo acids and L-glutamate. The protein is Aromatic amino acid aminotransferase of Rhodococcus jostii (strain RHA1).